The chain runs to 278 residues: Chitosanase (278 aa).

The first 41 residues, 1–41 (MRLKHPTARLALAALLVAVPRSVAAAGTVHAAPAPAGATRL), serve as a signal peptide directing secretion. The active-site Proton donor is the E63. D81 (nucleophile) is an active-site residue.

This sequence belongs to the glycosyl hydrolase 46 family.

The protein localises to the secreted. The catalysed reaction is Endohydrolysis of beta-(1-&gt;4)-linkages between D-glucosamine residues in a partly acetylated chitosan.. Aids in the defense against invading fungal pathogens by degrading their cell wall chitosan. This chain is Chitosanase (csn), found in Nocardioides sp. (strain N106).